The primary structure comprises 591 residues: Dihydroxyacetone kinase 2 (591 aa).

Residues 8-344 (SDGNIVTPYL…FDYPTTASGW (337 aa)) form the DhaK domain. The segment at 40 to 59 (ASAPNSGNPPKVSLVSGGGS) is disordered. Substrate contacts are provided by residues 58-61 (GSGH), Lys-109, and Asp-114. His-223 functions as the Tele-hemiaminal-histidine intermediate in the catalytic mechanism. The 204-residue stretch at 384-587 (DTFAKILLAG…LAALLDGFVT (204 aa)) folds into the DhaL domain. Residues 413 to 416 (DGDC), 459 to 460 (TS), 511 to 512 (TL), and 572 to 574 (DPG) each bind ATP.

It belongs to the dihydroxyacetone kinase (DAK) family.

It catalyses the reaction dihydroxyacetone + ATP = dihydroxyacetone phosphate + ADP + H(+). The enzyme catalyses D-glyceraldehyde + ATP = D-glyceraldehyde 3-phosphate + ADP + H(+). It participates in polyol metabolism; glycerol fermentation; glycerone phosphate from glycerol (oxidative route): step 2/2. Functionally, catalyzes both the phosphorylation of dihydroxyacetone and of glyceraldehyde. The protein is Dihydroxyacetone kinase 2 (DAK2) of Saccharomyces cerevisiae (strain ATCC 204508 / S288c) (Baker's yeast).